The following is a 408-amino-acid chain: Acetate kinase (408 aa).

Position 7 (asparagine 7) interacts with Mg(2+). An ATP-binding site is contributed by lysine 14. Substrate is bound at residue arginine 91. The Proton donor/acceptor role is filled by aspartate 148. Residues 208–212 (HLGNG), 283–285 (DFR), and 331–335 (GIGEN) contribute to the ATP site. A Mg(2+)-binding site is contributed by glutamate 384.

It belongs to the acetokinase family. As to quaternary structure, homodimer. Requires Mg(2+) as cofactor. Mn(2+) is required as a cofactor.

The protein localises to the cytoplasm. It catalyses the reaction acetate + ATP = acetyl phosphate + ADP. It functions in the pathway metabolic intermediate biosynthesis; acetyl-CoA biosynthesis; acetyl-CoA from acetate: step 1/2. Functionally, catalyzes the formation of acetyl phosphate from acetate and ATP. Can also catalyze the reverse reaction. The protein is Acetate kinase of Methanosarcina barkeri (strain Fusaro / DSM 804).